The primary structure comprises 187 residues: Dirigent protein 6 (187 aa).

The first 29 residues, 1-29 (MAFLVEKQLFKALFSFFLLVLLFSDTVLS), serve as a signal peptide directing secretion. Cys-40 and Cys-186 are joined by a disulfide. Asn-59 and Asn-123 each carry an N-linked (GlcNAc...) asparagine glycan.

It belongs to the plant dirigent protein family. Homodimer. Expressed in roots, cotyledon veins, leaf trichomes, flowers, siliques, and meristems. Present in interfascicular/vascular cambia and developing xylem.

The protein resides in the secreted. It is found in the extracellular space. It localises to the apoplast. Dirigent proteins impart stereoselectivity on the phenoxy radical-coupling reaction, yielding optically active lignans from two molecules of coniferyl alcohol in the biosynthesis of lignans, flavonolignans, and alkaloids and thus plays a central role in plant secondary metabolism. Enantiocomplementary dirigent protein that mediates the laccase-catalyzed enantioselective oxidative phenol coupling of (E)-coniferyl alcohol to (-)-pinoresinol. The sequence is that of Dirigent protein 6 (DIR6) from Arabidopsis thaliana (Mouse-ear cress).